The sequence spans 241 residues: General transcription factor IIF subunit 2 (241 aa).

Belongs to the TFIIF beta subunit family. As to quaternary structure, heterodimer of an alpha and a beta subunit.

The protein resides in the nucleus. In terms of biological role, TFIIF is a general transcription initiation factor that binds to RNA polymerase II and helps to recruit it to the initiation complex in collaboration with TFIIB. The protein is General transcription factor IIF subunit 2 (gtf2f2) of Dictyostelium discoideum (Social amoeba).